The chain runs to 190 residues: Major intrinsically disordered NOTCH2-binding receptor 1-like (190 aa).

Phosphoserine is present on S79. 2 N-linked (GlcNAc...) asparagine glycosylation sites follow: N109 and N125. The chain crosses the membrane as a helical span at residues 169–189 (GLILLVVISILVTIVTIITFF).

Belongs to the MINAR family. Interacts with NOTCH2. In terms of tissue distribution, highly expressed in the auditory hair cells.

Its subcellular location is the lysosome membrane. It is found in the endoplasmic reticulum membrane. In terms of biological role, binds cholesterol and may regulate the distribution and homeostasis of cholesterol in hair cells. May play a role in angiogenesis. The polypeptide is Major intrinsically disordered NOTCH2-binding receptor 1-like (Homo sapiens (Human)).